We begin with the raw amino-acid sequence, 84 residues long: Cell division topological specificity factor (84 aa).

It belongs to the MinE family.

In terms of biological role, prevents the cell division inhibition by proteins MinC and MinD at internal division sites while permitting inhibition at polar sites. This ensures cell division at the proper site by restricting the formation of a division septum at the midpoint of the long axis of the cell. The protein is Cell division topological specificity factor of Pseudomonas aeruginosa (strain LESB58).